Here is a 212-residue protein sequence, read N- to C-terminus: uncharacterized protein (212 aa).

The tract at residues 97-151 (SDASEAKNDDRRSDGRFALYSVSDTPETTTASRSADRSTNPKTAKHPKSAAKPTV) is disordered. Over residues 100-111 (SEAKNDDRRSDG) the composition is skewed to basic and acidic residues.

This is an uncharacterized protein from Mycobacterium tuberculosis (strain CDC 1551 / Oshkosh).